Consider the following 314-residue polypeptide: DNA-directed RNA polymerase subunit alpha (314 aa).

The segment at Met-1–Thr-228 is alpha N-terminal domain (alpha-NTD). Residues Lys-245 to Asp-314 form an alpha C-terminal domain (alpha-CTD) region.

The protein belongs to the RNA polymerase alpha chain family. In terms of assembly, homodimer. The RNAP catalytic core consists of 2 alpha, 1 beta, 1 beta' and 1 omega subunit. When a sigma factor is associated with the core the holoenzyme is formed, which can initiate transcription.

The enzyme catalyses RNA(n) + a ribonucleoside 5'-triphosphate = RNA(n+1) + diphosphate. In terms of biological role, DNA-dependent RNA polymerase catalyzes the transcription of DNA into RNA using the four ribonucleoside triphosphates as substrates. The chain is DNA-directed RNA polymerase subunit alpha from Geobacillus thermodenitrificans (strain NG80-2).